The chain runs to 428 residues: MDTVFALGSAQGRAGVSVIRLSGPAAWAVAETICGSLPDPRKSAVRVLRAQDGSVIDQALVLAFKAPHSFTGEDVVEFHVHGSIAVVRTVLDALSDQDVARLAEAGEFTRRALENGKLDLSQVEGLADLIDAETEAQRRQAVRVLTGALGEKVEVWRSKLIRAAALIEATIDFADEDVPVDVTPEVTSLLEDVSSDVRTEVAGTHVAERIRSGFEIALVGAPNAGKSTLLNKLAGRDAAITSEIAGTTRDVIEVRMDLGGLPVTFLDTAGLRQSADEIETIGIERAIKRAQEADLRVFLSGPDERLLIEPLEDDIRLTPKVDLAPGSQTGISGKTGQGIPELLEKIRSVFSERVSAVGLATHERHRLAMQRALEDLDNSFEALLRGPEFYDITAQELRSAIRALETLVGRIDAENLLDEIFSSFCLGK.

Residues Arg20, Glu77, and Lys117 each contribute to the (6S)-5-formyl-5,6,7,8-tetrahydrofolate site. One can recognise a TrmE-type G domain in the interval 213–351 (GFEIALVGAP…LLEKIRSVFS (139 aa)). Asn223 is a binding site for K(+). Residues 223–228 (NAGKST), 242–248 (SEIAGTT), and 267–270 (DTAG) each bind GTP. Residue Ser227 coordinates Mg(2+). K(+) contacts are provided by Ser242, Ile244, and Thr247. Thr248 contributes to the Mg(2+) binding site. A (6S)-5-formyl-5,6,7,8-tetrahydrofolate-binding site is contributed by Lys428.

This sequence belongs to the TRAFAC class TrmE-Era-EngA-EngB-Septin-like GTPase superfamily. TrmE GTPase family. Homodimer. Heterotetramer of two MnmE and two MnmG subunits. The cofactor is K(+).

The protein localises to the cytoplasm. Exhibits a very high intrinsic GTPase hydrolysis rate. Involved in the addition of a carboxymethylaminomethyl (cmnm) group at the wobble position (U34) of certain tRNAs, forming tRNA-cmnm(5)s(2)U34. This is tRNA modification GTPase MnmE from Roseobacter denitrificans (strain ATCC 33942 / OCh 114) (Erythrobacter sp. (strain OCh 114)).